A 522-amino-acid polypeptide reads, in one-letter code: 2-isopropylmalate synthase (522 aa).

The Pyruvate carboxyltransferase domain occupies 5–267 (VIIFDTTLRD…DCGINAKEIH (263 aa)). The Mn(2+) site is built by Asp14, His202, His204, and Asn238. The interval 392–522 (QLQHMMVHSD…IHKERELGGV (131 aa)) is regulatory domain.

The protein belongs to the alpha-IPM synthase/homocitrate synthase family. LeuA type 1 subfamily. As to quaternary structure, homodimer. Mn(2+) serves as cofactor.

The protein resides in the cytoplasm. The catalysed reaction is 3-methyl-2-oxobutanoate + acetyl-CoA + H2O = (2S)-2-isopropylmalate + CoA + H(+). It functions in the pathway amino-acid biosynthesis; L-leucine biosynthesis; L-leucine from 3-methyl-2-oxobutanoate: step 1/4. In terms of biological role, catalyzes the condensation of the acetyl group of acetyl-CoA with 3-methyl-2-oxobutanoate (2-ketoisovalerate) to form 3-carboxy-3-hydroxy-4-methylpentanoate (2-isopropylmalate). This is 2-isopropylmalate synthase from Shewanella frigidimarina (strain NCIMB 400).